The chain runs to 220 residues: Elongation factor Ts (220 aa).

The tract at residues 83–86 (TDFV) is involved in Mg(2+) ion dislocation from EF-Tu.

This sequence belongs to the EF-Ts family.

The protein localises to the cytoplasm. Its function is as follows. Associates with the EF-Tu.GDP complex and induces the exchange of GDP to GTP. It remains bound to the aminoacyl-tRNA.EF-Tu.GTP complex up to the GTP hydrolysis stage on the ribosome. The chain is Elongation factor Ts from Synechococcus sp. (strain CC9605).